A 584-amino-acid polypeptide reads, in one-letter code: Cationic amino acid transporter 7, chloroplastic (584 aa).

A chloroplast-targeting transit peptide spans 1–49 (MEAQYRNHDGDTSFSSLRVYLNSLSDTPSRFSRRAVSVSTSYDEMSRVR). The next 14 membrane-spanning stretches (helical) occupy residues 62–82 (WYDL…FVTT), 90–110 (AGPS…LSAF), 131–151 (ITFG…DYVL), 185–205 (GFNE…FVIC), 214–234 (VNMV…VMGF), 254–274 (FFPF…LSYI), 293–313 (IPMG…LMAI), 346–366 (VVGI…MLGQ), 396–416 (ASAF…LNVL), 417–437 (LNLV…AVIF), 449–469 (WPTL…TLVW), 480–500 (FILG…HCVV), 508–528 (FWGV…NIFL), and 540–560 (FGFF…HASY).

Belongs to the amino acid-polyamine-organocation (APC) superfamily. Cationic amino acid transporter (CAT) (TC 2.A.3.3) family.

It is found in the plastid. It localises to the chloroplast membrane. Functionally, permease involved in the transport of the cationic amino acids. This is Cationic amino acid transporter 7, chloroplastic (CAT7) from Arabidopsis thaliana (Mouse-ear cress).